A 158-amino-acid polypeptide reads, in one-letter code: 3-hydroxyacyl-[acyl-carrier-protein] dehydratase FabZ (158 aa).

His-57 is an active-site residue.

This sequence belongs to the thioester dehydratase family. FabZ subfamily.

The protein localises to the cytoplasm. The enzyme catalyses a (3R)-hydroxyacyl-[ACP] = a (2E)-enoyl-[ACP] + H2O. Functionally, involved in unsaturated fatty acids biosynthesis. Catalyzes the dehydration of short chain beta-hydroxyacyl-ACPs and long chain saturated and unsaturated beta-hydroxyacyl-ACPs. This is 3-hydroxyacyl-[acyl-carrier-protein] dehydratase FabZ from Anaeromyxobacter sp. (strain Fw109-5).